A 544-amino-acid chain; its full sequence is CTP synthase (544 aa).

An amidoligase domain region spans residues 1-265 (MTKFIFVTGG…DNIITEQLQL (265 aa)). Serine 13 lines the CTP pocket. Serine 13 lines the UTP pocket. ATP is bound by residues 14 to 19 (SLGKGI) and aspartate 71. Mg(2+) is bound by residues aspartate 71 and glutamate 139. CTP-binding positions include 146–148 (DIE), 186–191 (KTKPTQ), and lysine 222. Residues 186 to 191 (KTKPTQ) and lysine 222 contribute to the UTP site. The Glutamine amidotransferase type-1 domain maps to 290–544 (KIAMVGKYVD…VKAALNNKKA (255 aa)). Glycine 353 contacts L-glutamine. Catalysis depends on cysteine 380, which acts as the Nucleophile; for glutamine hydrolysis. Residues 381–384 (LGMQ), glutamate 404, and arginine 471 contribute to the L-glutamine site. Catalysis depends on residues histidine 517 and glutamate 519.

This sequence belongs to the CTP synthase family. As to quaternary structure, homotetramer.

It catalyses the reaction UTP + L-glutamine + ATP + H2O = CTP + L-glutamate + ADP + phosphate + 2 H(+). The catalysed reaction is L-glutamine + H2O = L-glutamate + NH4(+). The enzyme catalyses UTP + NH4(+) + ATP = CTP + ADP + phosphate + 2 H(+). It functions in the pathway pyrimidine metabolism; CTP biosynthesis via de novo pathway; CTP from UDP: step 2/2. Its activity is regulated as follows. Allosterically activated by GTP, when glutamine is the substrate; GTP has no effect on the reaction when ammonia is the substrate. The allosteric effector GTP functions by stabilizing the protein conformation that binds the tetrahedral intermediate(s) formed during glutamine hydrolysis. Inhibited by the product CTP, via allosteric rather than competitive inhibition. Catalyzes the ATP-dependent amination of UTP to CTP with either L-glutamine or ammonia as the source of nitrogen. Regulates intracellular CTP levels through interactions with the four ribonucleotide triphosphates. The polypeptide is CTP synthase (Neisseria meningitidis serogroup B (strain ATCC BAA-335 / MC58)).